Here is a 30-residue protein sequence, read N- to C-terminus: Cyclotide cter-Q (30 aa).

Positions 1–30 (GIPCGESCVFIPCISTVIGCSCKNKVCYRN) form a cross-link, cyclopeptide (Gly-Asn). 3 cysteine pairs are disulfide-bonded: Cys4–Cys20, Cys8–Cys22, and Cys13–Cys27.

This is a cyclic peptide.

The protein resides in the secreted. Functionally, probably participates in a plant defense mechanism. The polypeptide is Cyclotide cter-Q (Clitoria ternatea (Butterfly pea)).